We begin with the raw amino-acid sequence, 416 residues long: Squalene synthase (416 aa).

2 residues coordinate NADP(+): R52 and R77. D80, E83, and D84 together coordinate Mg(2+). R218 serves as a coordination point for NADP(+). A helical membrane pass occupies residues 284-304 (SVFNFCAIPQVMAIATLAACY). NADP(+)-binding residues include K315 and R317. Residues 384–404 (PIYLSFIMLLAALSWQYLSTL) traverse the membrane as a helical segment.

It belongs to the phytoene/squalene synthase family. Mg(2+) is required as a cofactor.

The protein resides in the endoplasmic reticulum membrane. The catalysed reaction is 2 (2E,6E)-farnesyl diphosphate + NADPH + H(+) = squalene + 2 diphosphate + NADP(+). It carries out the reaction 2 (2E,6E)-farnesyl diphosphate + NADH + H(+) = squalene + 2 diphosphate + NAD(+). It catalyses the reaction presqualene diphosphate + NADH + H(+) = squalene + diphosphate + NAD(+). The enzyme catalyses presqualene diphosphate + NADPH + H(+) = squalene + diphosphate + NADP(+). The catalysed reaction is 2 (2E,6E)-farnesyl diphosphate = presqualene diphosphate + diphosphate. The protein operates within terpene metabolism; lanosterol biosynthesis; lanosterol from farnesyl diphosphate: step 1/3. Its function is as follows. Catalyzes the condensation of 2 farnesyl pyrophosphate (FPP) moieties to form squalene. Proceeds in two distinct steps. In the first half-reaction, two molecules of FPP react to form the stable presqualene diphosphate intermediate (PSQPP), with concomitant release of a proton and a molecule of inorganic diphosphate. In the second half-reaction, PSQPP undergoes heterolysis, isomerization, and reduction with NADPH or NADH to form squalene. It is the first committed enzyme of the sterol biosynthesis pathway. The sequence is that of Squalene synthase (Fdft1) from Rattus norvegicus (Rat).